The following is a 119-amino-acid chain: Ribonuclease P protein component (119 aa).

The protein belongs to the RnpA family. In terms of assembly, consists of a catalytic RNA component (M1 or rnpB) and a protein subunit.

It carries out the reaction Endonucleolytic cleavage of RNA, removing 5'-extranucleotides from tRNA precursor.. In terms of biological role, RNaseP catalyzes the removal of the 5'-leader sequence from pre-tRNA to produce the mature 5'-terminus. It can also cleave other RNA substrates such as 4.5S RNA. The protein component plays an auxiliary but essential role in vivo by binding to the 5'-leader sequence and broadening the substrate specificity of the ribozyme. This chain is Ribonuclease P protein component, found in Listeria monocytogenes serotype 4a (strain HCC23).